The chain runs to 545 residues: Tripartite motif-containing 55 (545 aa).

Residues 26-82 (CPICLEMFTKPVVILPCQHNLCRKCASDIFQASNPYLPTRGGTTVASGGRFRCPSCR) form an RING-type zinc finger. The segment at 119–161 (LDQPMCEEHEEERINIYCLNCEVPTCSLCKVFGAHKDCQVAPL) adopts a B box-type zinc-finger fold. Zn(2+)-binding residues include Cys-124, His-127, Cys-147, and His-153. The region spanning 269 to 327 (MDEPEMAVFLQNAKTLLQKIVEASKAFQMEKLEQGYEIMSNFTVNLNREEKIIREIDFS) is the COS domain. Disordered stretches follow at residues 324–352 (IDFS…VEVE), 359–378 (IASS…SQLP), and 417–532 (SQQT…EPAR). A compositionally biased stretch (acidic residues) spans 328 to 352 (REEEEEEDAGEIDEEGEGEDAVEVE). Over residues 417–428 (SQQTTQSETSGP) the composition is skewed to polar residues. Positions 474–485 (SSVQSAEVAEAA) are enriched in low complexity. Residues 486–506 (TNEQAAVSGKESSSTAATSQI) are compositionally biased toward polar residues.

Targeted for degradation through the proteasomal and lysosomal pathways in the presence of SUMO3. Widely expressed in various tissues, besides skeletal muscle and heart, such as brain, lung, liver, spleen and kidney.

It localises to the nucleus. Its subcellular location is the cytoplasm. The catalysed reaction is S-ubiquitinyl-[E2 ubiquitin-conjugating enzyme]-L-cysteine + [acceptor protein]-L-lysine = [E2 ubiquitin-conjugating enzyme]-L-cysteine + N(6)-ubiquitinyl-[acceptor protein]-L-lysine.. Its function is as follows. E3 ubiquitin ligase that plays an important role in regulating cardiac development and contractility, muscle growth, metabolism, and fiber-type differentiation. Acts as a critical factor that regulates cardiomyocyte size during development in concert with TRIM63 by regulating E2F1-mediated gene expression. Plays a role in apoptosis induction in cardiomyocytes by promoting ubiquitination of the DUSP1 phosphatase. Promotes non-canonical NF-kappa-B signaling and B-cell-mediated immune responses by mediating NFKB2 'Lys-48'-linked ubiquitination and processing. In turn, NFKB2 is further processed by valosin-containing protein/VCP, an ATPase that mediates ubiquitin-dependent protein degradation by the proteasome. May play a role in preventing macrophages from producing inflammatory factors and migrating by downregulating the level of nuclear NF-kappa-B subunit RELA. Modifies also PPARG via polyubiquitination and accelerates PPARG proteasomal degradation to inhibit its activity. The chain is Tripartite motif-containing 55 (Trim55) from Mus musculus (Mouse).